The sequence spans 201 residues: Putative Ras-related protein Rab-1C (201 aa).

Residues 15 to 23 (GDSGVGKSC), 33 to 40 (YTESYIST), and 63 to 67 (DTAGQ) each bind GTP. The Effector region motif lies at 37–45 (YISTIGVDF). Ser-76 carries the post-translational modification (Microbial infection) O-(2-cholinephosphoryl)serine. GTP contacts are provided by residues 121–124 (NKSD) and 151–153 (SAK). Positions 174 to 201 (GPGAASGGERPNLKIDSTPVKPAGGGCC) are disordered. S-geranylgeranyl cysteine attachment occurs at residues Cys-200 and Cys-201.

The protein belongs to the small GTPase superfamily. Rab family. Post-translationally, (Microbial infection) Phosphocholinated at Ser-76 by L.pneumophila AnkX, leading to displace GDP dissociation inhibitors (GDI). Both GDP-bound and GTP-bound forms can be phosphocholinated. Dephosphocholinated by L.pneumophila Lem3, restoring accessibility to L.pneumophila GTPase effector LepB. (Microbial infection) Glycosylated by S.typhimurium protein Ssek3: arginine GlcNAcylation prevents GTPase activity, thereby disrupting vesicular protein transport from the endoplasmic reticulum (ER) to the Golgi compartment.

It localises to the membrane. Its subcellular location is the cytoplasm. The catalysed reaction is GTP + H2O = GDP + phosphate + H(+). Protein transport. Probably involved in vesicular traffic. This Homo sapiens (Human) protein is Putative Ras-related protein Rab-1C (RAB1C).